The chain runs to 354 residues: MSAGGGRAFAWQVFPPMPTCRVYGTVAHQDGHLLVLGGCGRAGLPLDTAETLDMASHTWLALAPLPTARAGAAAVVLGKQVLVVGGVDEVQSPVAAVEAFLMDEGRWERRATLPQAAMGVATVERDGMVYALGGMGPDTAPQAQVRVYEPRRDCWLSLPSMPTPCYGASTFLHGNKIYVLGGRQGKLPVTAFEAFDLEARTWTRHPSLPSRRAFAGCAMAEGSVFSLGGLQQPGPHNFYSRPHFVNTVEMFDLEHGSWTKLPRSLRMRDKRADFVVGSLGGHIVAIGGLGNQPCPLGSVESFSLARRRWEALPAMPTARCSCSSLQAGPRLFVIGGVAQGPSQAVEALCLRDGV.

Kelch repeat units lie at residues 1–31, 32–79, 81–127, 128–175, 176–222, 224–281, 282–329, and 331–354; these read MSAGGGRAFAWQVFPPMPTCRVYGTVAHQDG, HLLV…VLGK, VLVV…ERDG, MVYA…LHGN, KIYV…MAEG, VFSL…SLGG, HIVA…QAGP, and LFVIGGVAQGPSQAVEALCLRDGV.

It is found in the cytoplasm. The protein resides in the midbody. Its function is as follows. Involved in pinching off the separated nuclei at the cleavage furrow and in cytokinesis. Required for mitotic integrity and maintenance of chromosomal stability. Protects cells against mitotic errors, centrosomal amplification, micronucleus formation and aneuploidy. Plays a key role of midbody function involving abscission of the daughter cells during cytokinesis and appropriate chromosomal and nuclear segregation into the daughter cells. In Homo sapiens (Human), this protein is Kelch domain-containing protein 8B.